Reading from the N-terminus, the 147-residue chain is D(1B) dopamine receptor (147 aa).

A helical membrane pass occupies residues 1 to 12 (SILISFPVQLNW). Residues 13–55 (HRDQAGSWGGLDLTNNLANWTPWEEDVWEPDVRAENCDSSLNR) lie on the Extracellular side of the membrane. An N-linked (GlcNAc...) asparagine glycan is attached at Asn-54. Residues 56-78 (TYAISSSLVSFYIPVAIMIVTYT) traverse the membrane as a helical segment. Topologically, residues 79–128 (RIYRIAQVQIRRISSLERAAEHAQSCRSSAACAPDTSLRASIKKETKVLK) are cytoplasmic. Residues 129–147 (TLSVIMGVFVCCWLPFFIL) form a helical membrane-spanning segment.

This sequence belongs to the G-protein coupled receptor 1 family.

The protein resides in the cell membrane. Dopamine receptor whose activity is mediated by G proteins which activate adenylyl cyclase. This chain is D(1B) dopamine receptor (DRD5), found in Macaca mulatta (Rhesus macaque).